The following is a 258-amino-acid chain: Tritrans,polycis-undecaprenyl-diphosphate synthase (geranylgeranyl-diphosphate specific) (258 aa).

Asp37 is a catalytic residue. Asp37 lines the Mg(2+) pocket. Substrate is bound by residues 38–41 (GNRR), His54, and 82–84 (STE). Residue Asn85 is the Proton acceptor of the active site. Residues Phe86, Arg88, Arg207, and 213–215 (RIS) contribute to the substrate site. Mg(2+) is bound at residue Glu226.

Belongs to the UPP synthase family. In terms of assembly, homodimer. Mg(2+) is required as a cofactor.

It catalyses the reaction geranylgeranyl diphosphate + 7 isopentenyl diphosphate = tri-trans,hepta-cis-undecaprenyl diphosphate + 7 diphosphate. Functionally, catalyzes the sequential condensation of isopentenyl diphosphate (IPP) with geranylgeranyl diphosphate (GGPP) to yield (2Z,6Z,10Z,14Z,18Z,22Z,26Z,30E,34E,38E)-undecaprenyl diphosphate (tritrans,heptacis-UPP). It is probably the precursor of glycosyl carrier lipids. This is Tritrans,polycis-undecaprenyl-diphosphate synthase (geranylgeranyl-diphosphate specific) from Thermoplasma volcanium (strain ATCC 51530 / DSM 4299 / JCM 9571 / NBRC 15438 / GSS1).